The primary structure comprises 240 residues: Lysoplasmalogenase TMEM86A (240 aa).

Over 1–21 (MVSPVTVVKSEGPKLVPFFKA) the chain is Cytoplasmic. A helical membrane pass occupies residues 22–42 (TCVYFVLWLPSSSPSWVSTLI). A topological domain (extracellular) is located at residue Lys43. Residues 44–64 (CLPIFCLWLFLLAHGLGFLLA) traverse the membrane as a helical segment. Over 65–70 (HPSATR) the chain is Cytoplasmic. The helical transmembrane segment at 71 to 91 (IFVGLVFSAVGDAFLIWQDQG) threads the bilayer. A topological domain (extracellular) is located at residue Tyr92. A helical membrane pass occupies residues 93–113 (FVHGLLMFAVTHMFYASAFGM). Topologically, residues 114–115 (QP) are cytoplasmic. A helical transmembrane segment spans residues 116 to 136 (LALRTGLVMAALSGLCYALLY). The Extracellular portion of the chain corresponds to 137–138 (PC). The helical transmembrane segment at 139–159 (LSGAFTYLVGVYVALIGFMGW) threads the bilayer. The Cytoplasmic portion of the chain corresponds to 160–174 (RAMAGLRLAGADWRW). The chain crosses the membrane as a helical span at residues 175–195 (TELAAGSGALFFIISDLTIAL). The Extracellular portion of the chain corresponds to 196–206 (NKFCFPVPYSR). Residues 207–227 (ALIMSTYYVAQMLVALSAVES) traverse the membrane as a helical segment. Over 228–240 (REPVEHYRLTKAN) the chain is Cytoplasmic.

The protein belongs to the TMEM86 family. In terms of tissue distribution, expressed in the macrophages.

It is found in the endoplasmic reticulum membrane. The catalysed reaction is a 1-O-(1Z-alkenyl)-sn-glycero-3-phosphocholine + H2O = a 2,3-saturated aldehyde + sn-glycerol 3-phosphocholine. It catalyses the reaction a 1-O-(1Z-alkenyl)-sn-glycero-3-phosphoethanolamine + H2O = a 2,3-saturated aldehyde + sn-glycero-3-phosphoethanolamine. In terms of biological role, catalyzes the hydrolysis of the vinyl ether bond of choline or ethanolamine lysoplasmalogens, forming fatty aldehyde and glycerophosphocholine or glycerophosphoethanolamine, respectively and is specific for the sn-2-deacylated (lyso) form of plasmalogen. Plays an important role in lysoplasmalogen metabolism in the adipocyte tissue and macrophages. The chain is Lysoplasmalogenase TMEM86A (TMEM86A) from Homo sapiens (Human).